A 388-amino-acid chain; its full sequence is Beta-1,4-galactosyltransferase 5 (388 aa).

The Cytoplasmic portion of the chain corresponds to 1 to 14 (MRARRGLLRLPRRS). Residues 15–35 (LLAALFFFSLSSSLLYFVYVA) traverse the membrane as a helical; Signal-anchor for type II membrane protein segment. At 36-388 (PGIVNTYLFM…TPELAQVTEY (353 aa)) the chain is on the lumenal side. N-linked (GlcNAc...) asparagine glycans are attached at residues N77, N81, N90, and N128. A disulfide bridge links C114 with C158. UDP-alpha-D-galactose is bound by residues 169-173 (PFRNR), 208-210 (FNR), 235-236 (VD), Y264, and W296. A disulfide bond links C229 and C248. D236 is a binding site for Mn(2+). 298–301 (GEDD) contributes to the N-acetyl-D-glucosamine binding site. A Mn(2+)-binding site is contributed by H329. Residue 329 to 330 (HH) coordinates UDP-alpha-D-galactose. R340 is an N-acetyl-D-glucosamine binding site. N-linked (GlcNAc...) asparagine glycosylation is found at N360, N364, and N373.

This sequence belongs to the glycosyltransferase 7 family. The cofactor is Mn(2+). In terms of tissue distribution, highest levels in heart, brain, liver and kidney with lower levels in spleen, lung and testis.

It is found in the golgi apparatus. Its subcellular location is the golgi stack membrane. The enzyme catalyses a beta-D-glucosyl-(1&lt;-&gt;1')-N-acylsphing-4-enine + UDP-alpha-D-galactose = a beta-D-Gal-(1-&gt;4)-beta-D-Glc-(1&lt;-&gt;1)-Cer(d18:1(4E)) + UDP + H(+). The protein operates within protein modification; protein glycosylation. It functions in the pathway sphingolipid metabolism. In terms of biological role, catalyzes the synthesis of lactosylceramide (LacCer) via the transfer of galactose from UDP-galactose to glucosylceramide (GlcCer). LacCer is the starting point in the biosynthesis of all gangliosides (membrane-bound glycosphingolipids) which play pivotal roles in the CNS including neuronal maturation and axonal and myelin formation. Plays a role in the glycosylation of BMPR1A and regulation of its protein stability. Essential for extraembryonic development during early embryogenesis. The sequence is that of Beta-1,4-galactosyltransferase 5 from Mus musculus (Mouse).